We begin with the raw amino-acid sequence, 110 residues long: U1-lycotoxin-Ls1aa (110 aa).

The first 20 residues, 1–20 (MKFVLLFGVLLVTLFSYSSA), serve as a signal peptide directing secretion. The propeptide occupies 21–44 (EMLDDFDQADEDELLSLIEKEEAR). 4 disulfide bridges follow: cysteine 47/cysteine 62, cysteine 54/cysteine 71, cysteine 61/cysteine 89, and cysteine 73/cysteine 87.

It belongs to the neurotoxin 19 (CSTX) family. 03 subfamily. Expressed by the venom gland.

The protein resides in the secreted. This Lycosa singoriensis (Wolf spider) protein is U1-lycotoxin-Ls1aa.